Consider the following 513-residue polypeptide: Type-2 serine--tRNA ligase (513 aa).

An L-serine-binding site is contributed by A312. C314 contributes to the Zn(2+) binding site. R344 is a binding site for L-serine. Residues 344 to 346 (RWE) and 355 to 356 (RV) each bind ATP. 361–363 (RVE) contacts L-serine. Residues E363 and C467 each contribute to the Zn(2+) site. An ATP-binding site is contributed by R474.

Belongs to the class-II aminoacyl-tRNA synthetase family. Type-2 seryl-tRNA synthetase subfamily. Homodimer. Requires Zn(2+) as cofactor.

The protein localises to the cytoplasm. The enzyme catalyses tRNA(Ser) + L-serine + ATP = L-seryl-tRNA(Ser) + AMP + diphosphate + H(+). The catalysed reaction is tRNA(Sec) + L-serine + ATP = L-seryl-tRNA(Sec) + AMP + diphosphate + H(+). Its pathway is aminoacyl-tRNA biosynthesis; selenocysteinyl-tRNA(Sec) biosynthesis; L-seryl-tRNA(Sec) from L-serine and tRNA(Sec): step 1/1. Catalyzes the attachment of serine to tRNA(Ser). Is also able to aminoacylate tRNA(Sec) with serine, to form the misacylated tRNA L-seryl-tRNA(Sec), which will be further converted into selenocysteinyl-tRNA(Sec). The sequence is that of Type-2 serine--tRNA ligase (serS) from Methanothermobacter thermautotrophicus (strain ATCC 29096 / DSM 1053 / JCM 10044 / NBRC 100330 / Delta H) (Methanobacterium thermoautotrophicum).